The following is a 210-amino-acid chain: Large ribosomal subunit protein uL4 (210 aa).

The segment at 46-85 (QGTASTLTRSEVRGGGRKPYKQKGTGRARQGSIRTPLRPG) is disordered. Over residues 60–71 (GGRKPYKQKGTG) the composition is skewed to basic residues.

It belongs to the universal ribosomal protein uL4 family. In terms of assembly, part of the 50S ribosomal subunit.

In terms of biological role, one of the primary rRNA binding proteins, this protein initially binds near the 5'-end of the 23S rRNA. It is important during the early stages of 50S assembly. It makes multiple contacts with different domains of the 23S rRNA in the assembled 50S subunit and ribosome. Functionally, forms part of the polypeptide exit tunnel. This chain is Large ribosomal subunit protein uL4, found in Prochlorococcus marinus (strain AS9601).